Consider the following 308-residue polypeptide: Olfactory receptor 8D1 (308 aa).

Topologically, residues 1 to 25 (MTMENYSMAAQFVLDGLTQQAELQL) are extracellular. Asn5 is a glycosylation site (N-linked (GlcNAc...) asparagine). Residues 26-46 (PLFLLFLGIYVVTVVGNLGMI) form a helical membrane-spanning segment. Residues 47–54 (LLIAVSPL) lie on the Cytoplasmic side of the membrane. The chain crosses the membrane as a helical span at residues 55–75 (LHTPMYYFLSSLSFVDFCYSS). Over 76–99 (VITPKMLVNFLGKKNTILYSECMV) the chain is Extracellular. Cys97 and Cys189 form a disulfide bridge. The helical transmembrane segment at 100–120 (QLFFFVVFVVAEGYLLTAMAY) threads the bilayer. Residues 121-139 (DRYVAICSPLLYNAIMSSW) are Cytoplasmic-facing. A helical transmembrane segment spans residues 140-160 (VCSLLVLAAFFLGFLSALTHT). The Extracellular portion of the chain corresponds to 161–197 (SAMMKLSFCKSHIINHYFCDVLPLLNLSCSNTHLNEL). An N-linked (GlcNAc...) asparagine glycan is attached at Asn186. Residues 198–217 (LLFIIAGFNTLVPTLAVAVS) form a helical membrane-spanning segment. Residues 218 to 237 (YAFILYSILHIRSSEGRSKA) lie on the Cytoplasmic side of the membrane. Residues 238-258 (FGTCSSHLMAVVIFFGSITFM) traverse the membrane as a helical segment. Topologically, residues 259–271 (YFKPPSSNSLDQE) are extracellular. The helical transmembrane segment at 272–292 (KVSSVFYTTVIPMLNPLIYSL) threads the bilayer. Residues 293 to 308 (RNKDVKKALRKVLVGK) lie on the Cytoplasmic side of the membrane.

It belongs to the G-protein coupled receptor 1 family. Expressed in the tongue.

The protein resides in the cell membrane. In terms of biological role, odorant receptor (Potential). May be involved in taste perception. This chain is Olfactory receptor 8D1 (OR8D1), found in Homo sapiens (Human).